A 545-amino-acid chain; its full sequence is Phenylalanine--tRNA ligase beta subunit (545 aa).

The 76-residue stretch at 268–343 (FLHKIQNVRE…MSIGYNNLEP (76 aa)) folds into the B5 domain. 4 residues coordinate Mg(2+): Asp-321, Asp-327, Glu-330, and Asp-331.

Belongs to the phenylalanyl-tRNA synthetase beta subunit family. Type 2 subfamily. As to quaternary structure, tetramer of two alpha and two beta subunits. Mg(2+) is required as a cofactor.

The protein localises to the cytoplasm. It carries out the reaction tRNA(Phe) + L-phenylalanine + ATP = L-phenylalanyl-tRNA(Phe) + AMP + diphosphate + H(+). The sequence is that of Phenylalanine--tRNA ligase beta subunit from Saccharolobus islandicus (strain M.16.27) (Sulfolobus islandicus).